The chain runs to 304 residues: Acetylxylan esterase A (304 aa).

The N-terminal stretch at 1-19 is a signal peptide; the sequence is MVKLQYLLSILLYAYSCTA. Serine 147 serves as the catalytic Charge relay system. An N-linked (GlcNAc...) asparagine glycan is attached at asparagine 189.

The protein belongs to the carbohydrate esterase 1 (CE1) family. AxeA subfamily. In terms of assembly, monomer.

Its subcellular location is the secreted. The enzyme catalyses Deacetylation of xylans and xylo-oligosaccharides.. Its pathway is glycan degradation; xylan degradation. Functionally, acetylxylan esterase involved in the hydrolysis of xylan, a major structural heterogeneous polysaccharide found in plant biomass representing the second most abundant polysaccharide in the biosphere, after cellulose. Degrades acetylated xylans by cleaving acetyl side groups from the hetero-xylan backbone. This is Acetylxylan esterase A (axeA) from Emericella nidulans (strain FGSC A4 / ATCC 38163 / CBS 112.46 / NRRL 194 / M139) (Aspergillus nidulans).